Here is a 922-residue protein sequence, read N- to C-terminus: Neuropilin-1 (922 aa).

Positions 1-21 are cleaved as a signal peptide; the sequence is MERGLPLLCATLALALALAGA. Over 22–855 the chain is Extracellular; sequence FRSDKCGGTI…PGNVLKTLDP (834 aa). 3 cysteine pairs are disulfide-bonded: Cys27–Cys54, Cys82–Cys104, and Cys147–Cys173. 2 consecutive CUB domains span residues 27-141 and 147-265; these read CGGT…YEIF and CSQN…YSVL. An N-linked (GlcNAc...) asparagine glycan is attached at Asn150. Residues Glu195, Asp209, and Asp250 each coordinate Ca(2+). Cys206 and Cys228 are oxidised to a cystine. Asn261, Asn300, and Asn522 each carry an N-linked (GlcNAc...) asparagine glycan. 2 cysteine pairs are disulfide-bonded: Cys275-Cys424 and Cys431-Cys583. 2 F5/8 type C domains span residues 275 to 424 and 431 to 583; these read CMEA…VYGC and CSGM…LLGC. An O-linked (Xyl...) (chondroitin sulfate) serine; alternate glycan is attached at Ser612. Ser612 carries an O-linked (Xyl...) (heparan sulfate) serine; alternate glycan. Residues 645–811 enclose the MAM domain; that stretch reads TYGFNCEFGW…NHIPQEDCAK (167 aa). The O-linked (Xyl...) (chondroitin sulfate) serine glycan is linked to Ser829. Residue Asn841 is glycosylated (N-linked (GlcNAc...) asparagine). A helical transmembrane segment spans residues 856 to 880; it reads ILITIIAMSALGVLLGAVCGVVLYC. Over 881–922 the chain is Cytoplasmic; that stretch reads ACWHNGMSERNLSALENYNFELVDGVKLKKDKLNPQSNYSEA. A Phosphoserine modification is found at Ser893.

The protein belongs to the neuropilin family. In terms of assembly, homodimer, and heterodimer with NRP2. Binds PLXNB1. Interacts with FER. Interacts with VEGFA. Interacts with ABCB8/MITOSUR in mitochondria. As to expression, found in the embryonic nervous system. Expressed in dorsal root ganglia.

Its subcellular location is the mitochondrion membrane. It localises to the cell membrane. The protein resides in the cytoplasm. Functionally, cell-surface receptor involved in the development of the cardiovascular system, in angiogenesis, in the formation of certain neuronal circuits and in organogenesis outside the nervous system. Mediates the chemorepulsant activity of semaphorins. Recognizes a C-end rule (CendR) motif R/KXXR/K on its ligands which causes cellular internalization and vascular leakage. It binds to semaphorin 3A, the PLGF-2 isoform of PGF, the VEGF165 isoform of VEGFA and VEGFB. Coexpression with KDR results in increased VEGF165 binding to KDR as well as increased chemotaxis. Regulates VEGF-induced angiogenesis. Binding to VEGFA initiates a signaling pathway needed for motor neuron axon guidance and cell body migration, including for the caudal migration of facial motor neurons from rhombomere 4 to rhombomere 6 during embryonic development. Regulates mitochondrial iron transport via interaction with ABCB8/MITOSUR. The polypeptide is Neuropilin-1 (Nrp1) (Rattus norvegicus (Rat)).